The following is a 312-amino-acid chain: Ribosomal protein L11 methyltransferase (312 aa).

Residues threonine 160, glycine 181, aspartate 203, and asparagine 246 each contribute to the S-adenosyl-L-methionine site.

This sequence belongs to the methyltransferase superfamily. PrmA family.

The protein resides in the cytoplasm. It carries out the reaction L-lysyl-[protein] + 3 S-adenosyl-L-methionine = N(6),N(6),N(6)-trimethyl-L-lysyl-[protein] + 3 S-adenosyl-L-homocysteine + 3 H(+). Its function is as follows. Methylates ribosomal protein L11. The chain is Ribosomal protein L11 methyltransferase from Staphylococcus aureus (strain JH1).